The sequence spans 432 residues: Adenylosuccinate synthetase (432 aa).

GTP is bound by residues 13–19 (GDEGKGK) and 41–43 (GHT). The Proton acceptor role is filled by aspartate 14. Mg(2+) contacts are provided by aspartate 14 and glycine 41. IMP contacts are provided by residues 14 to 17 (DEGK), 39 to 42 (NAGH), threonine 130, arginine 144, glutamine 225, threonine 240, and arginine 304. Histidine 42 functions as the Proton donor in the catalytic mechanism. 300 to 306 (STTGRPR) is a binding site for substrate. GTP is bound by residues arginine 306, 332–334 (KLD), and 416–418 (STG).

It belongs to the adenylosuccinate synthetase family. In terms of assembly, homodimer. Mg(2+) is required as a cofactor.

The protein resides in the cytoplasm. It catalyses the reaction IMP + L-aspartate + GTP = N(6)-(1,2-dicarboxyethyl)-AMP + GDP + phosphate + 2 H(+). Its pathway is purine metabolism; AMP biosynthesis via de novo pathway; AMP from IMP: step 1/2. Its function is as follows. Plays an important role in the de novo pathway of purine nucleotide biosynthesis. Catalyzes the first committed step in the biosynthesis of AMP from IMP. In Nitrosomonas europaea (strain ATCC 19718 / CIP 103999 / KCTC 2705 / NBRC 14298), this protein is Adenylosuccinate synthetase.